Here is a 124-residue protein sequence, read N- to C-terminus: Small ribosomal subunit protein uS13 (124 aa).

Residues 94 to 117 (NLPVRGQRTRTNARTRKGPRKTVA) show a composition bias toward basic residues. The segment at 94 to 124 (NLPVRGQRTRTNARTRKGPRKTVANKKIESK) is disordered.

This sequence belongs to the universal ribosomal protein uS13 family. In terms of assembly, part of the 30S ribosomal subunit. Forms a loose heterodimer with protein S19. Forms two bridges to the 50S subunit in the 70S ribosome.

In terms of biological role, located at the top of the head of the 30S subunit, it contacts several helices of the 16S rRNA. In the 70S ribosome it contacts the 23S rRNA (bridge B1a) and protein L5 of the 50S subunit (bridge B1b), connecting the 2 subunits; these bridges are implicated in subunit movement. Contacts the tRNAs in the A and P-sites. This Mycoplasma pneumoniae (strain ATCC 29342 / M129 / Subtype 1) (Mycoplasmoides pneumoniae) protein is Small ribosomal subunit protein uS13.